Reading from the N-terminus, the 285-residue chain is NAD kinase (285 aa).

The active-site Proton acceptor is the aspartate 76. NAD(+)-binding positions include 76-77 (DG), 151-152 (NE), histidine 162, arginine 179, aspartate 181, 192-197 (TAYSLS), and glutamine 252.

The protein belongs to the NAD kinase family. A divalent metal cation serves as cofactor.

It is found in the cytoplasm. It carries out the reaction NAD(+) + ATP = ADP + NADP(+) + H(+). Its function is as follows. Involved in the regulation of the intracellular balance of NAD and NADP, and is a key enzyme in the biosynthesis of NADP. Catalyzes specifically the phosphorylation on 2'-hydroxyl of the adenosine moiety of NAD to yield NADP. This chain is NAD kinase, found in Haemophilus influenzae (strain ATCC 51907 / DSM 11121 / KW20 / Rd).